Here is a 1487-residue protein sequence, read N- to C-terminus: Chromosome partition protein MukB (1487 aa).

Residue 34–41 coordinates ATP; the sequence is GGNGAGKS. Coiled coils occupy residues 297–426, 460–666, 781–806, 836–1111, and 1210–1266; these read SSRE…LEKA, ALKH…RLAS, RAAR…AKAA, EQAL…RTFV, and VEAI…LSNI. The interval 667 to 784 is flexible hinge; the sequence is PGGSNDPRLK…VIPLFGRAAR (118 aa).

The protein belongs to the SMC family. MukB subfamily. As to quaternary structure, homodimerization via its hinge domain. Binds to DNA via its C-terminal region. Interacts, and probably forms a ternary complex, with MukE and MukF via its C-terminal region. The complex formation is stimulated by calcium or magnesium. Interacts with tubulin-related protein FtsZ.

It is found in the cytoplasm. The protein localises to the nucleoid. In terms of biological role, plays a central role in chromosome condensation, segregation and cell cycle progression. Functions as a homodimer, which is essential for chromosome partition. Involved in negative DNA supercoiling in vivo, and by this means organize and compact chromosomes. May achieve or facilitate chromosome segregation by condensation DNA from both sides of a centrally located replisome during cell division. The protein is Chromosome partition protein MukB of Vibrio vulnificus (strain CMCP6).